An 872-amino-acid chain; its full sequence is G-type lectin S-receptor-like serine/threonine-protein kinase At5g24080 (872 aa).

Residues 1–25 (MSSFHFYFPSVGLFSFFCFFLVSLA) form the signal peptide. The Extracellular segment spans residues 26-472 (TEPHIGLGSK…SRKSHGLRQK (447 aa)). The 120-residue stretch at 30–149 (IGLGSKLKAS…EVTAGPTIWQ (120 aa)) folds into the Bulb-type lectin domain. N-linked (GlcNAc...) asparagine glycosylation is found at Asn-49, Asn-117, Asn-208, Asn-219, Asn-261, and Asn-294. In terms of domain architecture, EGF-like; atypical spans 306–344 (VSNPCDIAGICGNGVCNLDRTKKNADCLCLPGSVKLPDQ). Intrachain disulfides connect Cys-310/Cys-321 and Cys-316/Cys-332. N-linked (GlcNAc...) asparagine glycosylation is found at Asn-353, Asn-367, and Asn-390. The PAN domain occupies 360–447 (CESNINRNGS…PGSTLFVKTR (88 aa)). 2 cysteine pairs are disulfide-bonded: Cys-400–Cys-424 and Cys-404–Cys-410. Residues Asn-449 and Asn-459 are each glycosylated (N-linked (GlcNAc...) asparagine). A helical transmembrane segment spans residues 473–493 (VLVIPIVVGMLVLVALLGMLL). At 494 to 872 (YYNLDRKRTL…TCSYSSMSPR (379 aa)) the chain is on the cytoplasmic side. Thr-521 carries the post-translational modification Phosphothreonine. In terms of domain architecture, Protein kinase spans 530–810 (NNFSQLLGSG…LEGTSDEINL (281 aa)). ATP-binding positions include 536-544 (LGSGGFGTV) and Lys-558. Tyr-603 carries the post-translational modification Phosphotyrosine. The caM-binding stretch occupies residues 619-637 (EQTANLLDWRTRFEIAVAT). Asp-656 (proton acceptor) is an active-site residue. Phosphothreonine occurs at positions 690 and 695.

The protein belongs to the protein kinase superfamily. Ser/Thr protein kinase family.

Its subcellular location is the cell membrane. It catalyses the reaction L-seryl-[protein] + ATP = O-phospho-L-seryl-[protein] + ADP + H(+). It carries out the reaction L-threonyl-[protein] + ATP = O-phospho-L-threonyl-[protein] + ADP + H(+). The polypeptide is G-type lectin S-receptor-like serine/threonine-protein kinase At5g24080 (Arabidopsis thaliana (Mouse-ear cress)).